The chain runs to 525 residues: Ribonuclease Y (525 aa).

The helical transmembrane segment at 3–23 threads the bilayer; the sequence is IFFISLVLIVLASVVFFVGGF. In terms of domain architecture, KH spans 215 to 300; sequence ALSVVHIQSD…KAYEDAKKEI (86 aa). The region spanning 341-433 is the HD domain; that stretch reads LLQHSREVAM…VDAANVISLS (93 aa).

Belongs to the RNase Y family.

The protein resides in the cell membrane. Its function is as follows. Endoribonuclease that initiates mRNA decay. This chain is Ribonuclease Y, found in Chlorobium phaeobacteroides (strain DSM 266 / SMG 266 / 2430).